Reading from the N-terminus, the 66-residue chain is Large ribosomal subunit protein bL35 (66 aa).

Belongs to the bacterial ribosomal protein bL35 family.

The sequence is that of Large ribosomal subunit protein bL35 from Hyphomonas neptunium (strain ATCC 15444).